We begin with the raw amino-acid sequence, 833 residues long: V-type proton ATPase 116 kDa subunit a 4 (833 aa).

Over 1 to 390 the chain is Cytoplasmic; that stretch reads MASVFRSEEM…DAYGVGSYRE (390 aa). Residues 391–409 form a helical membrane-spanning segment; sequence INPAPYTIITFPFLFAVMF. The Vacuolar portion of the chain corresponds to 410–411; sequence GD. The chain crosses the membrane as a helical span at residues 412–428; the sequence is CGHGMVMLMAALWMVLN. Over 429–443 the chain is Cytoplasmic; it reads ERHLLAQKSTNEMWN. A helical transmembrane segment spans residues 444 to 473; it reads IFFNGRYLILLMGIFSIYTGLIYNDCFSKS. Topologically, residues 474–538 are vacuolar; that stretch reads FNIFGSSWSV…ASNKLTFLNS (65 aa). The chain crosses the membrane as a helical span at residues 539–558; sequence YKMKMSVILGIAHMIFGVIL. Residues 559–576 lie on the Cytoplasmic side of the membrane; that stretch reads SLFNHIYFRRTLNIILQF. Residues 577 to 597 traverse the membrane as a helical segment; sequence IPEMIFMLSLFGYLVFMIIFK. The Vacuolar segment spans residues 598–642; it reads WCRYDAHTSRKAPSILIHFIGMFLFDYDDSSNAPLYGHQQEVQTF. The chain crosses the membrane as a helical span at residues 643–662; it reads FVIIALVSVPWMLLIKPFVL. Topologically, residues 663–720 are cytoplasmic; sequence RAKHQKSQLQSFTIHEDAVEGDHSGHSSKKTAGAHGMKDGHEEEFNFGDIFVHQAIHT. Residues 681–700 are disordered; the sequence is VEGDHSGHSSKKTAGAHGMK. Residues 721–745 form a helical membrane-spanning segment; sequence IEYCLGCISNTASYLRLWALSLAHA. Residues 746–766 lie on the Vacuolar side of the membrane; it reads ELSEVLWTMVMSIGLRLQGWA. The chain crosses the membrane as a helical span at residues 767-805; sequence GLVGVFIIFAVFAVLTVAILLVMEGLSAFLHALRLHWVE. The Cytoplasmic portion of the chain corresponds to 806 to 833; that stretch reads FQNKFYEGAGSKFSPFSFKHVLEGTAEE.

Belongs to the V-ATPase 116 kDa subunit family. In terms of assembly, V-ATPase is a heteromultimeric enzyme made up of two complexes: the ATP-hydrolytic V1 complex and the proton translocation V0 complex. The V1 complex consists of three catalytic AB heterodimers that form a heterohexamer, three peripheral stalks each consisting of EG heterodimers, one central rotor including subunits D and F, and the regulatory subunits C and H. The proton translocation complex V0 consists of the proton transport subunit a, a ring of proteolipid subunits c9c'', rotary subunit d, subunits e and f, and the accessory subunits ATP6AP1/Ac45 and ATP6AP2/PRR. Interacts with the V1 complex V-ATPase subunit A ATP6V1A. Interacts with the V0 complex V-ATPase subunit c ATP6V0C. As to expression, specifically expressed in kidney, but not in the heart, brain, spleen, lung, liver, muscle, or testis. Distribution within the kidney appears more widespread than that seen in man. High intensity staining at the surface of intercalated cells, with additional expression in the proximal tubule.

It is found in the apical cell membrane. It localises to the basolateral cell membrane. Functionally, subunit of the V0 complex of vacuolar(H+)-ATPase (V-ATPase), a multisubunit enzyme composed of a peripheral complex (V1) that hydrolyzes ATP and a membrane integral complex (V0) that translocates protons. V-ATPase is responsible for acidifying and maintaining the pH of intracellular compartments and in some cell types, is targeted to the plasma membrane, where it is responsible for acidifying the extracellular environment. Involved in normal vectorial acid transport into the urine by the kidney. This is V-type proton ATPase 116 kDa subunit a 4 (Atp6v0a4) from Mus musculus (Mouse).